Here is an 82-residue protein sequence, read N- to C-terminus: Exodeoxyribonuclease 7 small subunit (82 aa).

The protein belongs to the XseB family. Heterooligomer composed of large and small subunits.

Its subcellular location is the cytoplasm. It carries out the reaction Exonucleolytic cleavage in either 5'- to 3'- or 3'- to 5'-direction to yield nucleoside 5'-phosphates.. Bidirectionally degrades single-stranded DNA into large acid-insoluble oligonucleotides, which are then degraded further into small acid-soluble oligonucleotides. The polypeptide is Exodeoxyribonuclease 7 small subunit (Colwellia psychrerythraea (strain 34H / ATCC BAA-681) (Vibrio psychroerythus)).